The sequence spans 347 residues: D-alanine--D-alanine ligase (347 aa).

Residues 134-332 form the ATP-grasp domain; sequence KLYAKDLGVK…LAQSLPKTPK (199 aa). 161-216 contributes to the ATP binding site; sequence LMNFNFPFIIKPNNAGSSLGVNVVKEEKELVYALDGAFEYSKEVLIEPFIQGVKEY. Residues Asp288, Glu300, and Asn302 each contribute to the Mg(2+) site.

This sequence belongs to the D-alanine--D-alanine ligase family. The cofactor is Mg(2+). Mn(2+) is required as a cofactor.

Its subcellular location is the cytoplasm. The catalysed reaction is 2 D-alanine + ATP = D-alanyl-D-alanine + ADP + phosphate + H(+). The protein operates within cell wall biogenesis; peptidoglycan biosynthesis. Its function is as follows. Cell wall formation. This chain is D-alanine--D-alanine ligase, found in Helicobacter pylori (strain ATCC 700392 / 26695) (Campylobacter pylori).